A 459-amino-acid chain; its full sequence is Zinc finger protein 213 (459 aa).

The SCAN box domain maps to arginine 45–glutamine 126. The tract at residues valine 128–glutamate 188 is disordered. One can recognise a KRAB domain in the interval valine 202–proline 292. C2H2-type zinc fingers lie at residues histidine 317 to histidine 339, histidine 345 to histidine 367, phenylalanine 373 to histidine 395, phenylalanine 401 to histidine 423, and phenylalanine 429 to histidine 451.

This sequence belongs to the krueppel C2H2-type zinc-finger protein family. In terms of tissue distribution, widely expressed with highest levels in testis.

It localises to the nucleus. In terms of biological role, may be involved in transcriptional regulation. The sequence is that of Zinc finger protein 213 (ZNF213) from Homo sapiens (Human).